The sequence spans 663 residues: UvrABC system protein B (663 aa).

The Helicase ATP-binding domain occupies 30–417 (EGIKAGKRHQ…TDKMVEQIIR (388 aa)). 43-50 (GATGTGKT) lines the ATP pocket. The short motif at 96-119 (YYDYYQPEAYVPSTDTFIEKDASI) is the Beta-hairpin element. One can recognise a Helicase C-terminal domain in the interval 434–600 (QIDDLLSEIQ…TINKKIHDLI (167 aa)). Residues 627-662 (QKTIDNIEKEMKQAAKDLDFEKATELRDMLFELKAE) enclose the UVR domain.

The protein belongs to the UvrB family. As to quaternary structure, forms a heterotetramer with UvrA during the search for lesions. Interacts with UvrC in an incision complex.

The protein resides in the cytoplasm. In terms of biological role, the UvrABC repair system catalyzes the recognition and processing of DNA lesions. A damage recognition complex composed of 2 UvrA and 2 UvrB subunits scans DNA for abnormalities. Upon binding of the UvrA(2)B(2) complex to a putative damaged site, the DNA wraps around one UvrB monomer. DNA wrap is dependent on ATP binding by UvrB and probably causes local melting of the DNA helix, facilitating insertion of UvrB beta-hairpin between the DNA strands. Then UvrB probes one DNA strand for the presence of a lesion. If a lesion is found the UvrA subunits dissociate and the UvrB-DNA preincision complex is formed. This complex is subsequently bound by UvrC and the second UvrB is released. If no lesion is found, the DNA wraps around the other UvrB subunit that will check the other stand for damage. The polypeptide is UvrABC system protein B (Staphylococcus aureus (strain COL)).